The primary structure comprises 312 residues: Aspartate carbamoyltransferase catalytic subunit (312 aa).

Arginine 55 and threonine 56 together coordinate carbamoyl phosphate. Residue lysine 83 participates in L-aspartate binding. Residues arginine 105, histidine 133, and glutamine 136 each contribute to the carbamoyl phosphate site. Residues arginine 166 and arginine 220 each coordinate L-aspartate. Residues glycine 261 and proline 262 each coordinate carbamoyl phosphate.

It belongs to the aspartate/ornithine carbamoyltransferase superfamily. ATCase family. As to quaternary structure, heterododecamer (2C3:3R2) of six catalytic PyrB chains organized as two trimers (C3), and six regulatory PyrI chains organized as three dimers (R2).

It carries out the reaction carbamoyl phosphate + L-aspartate = N-carbamoyl-L-aspartate + phosphate + H(+). Its pathway is pyrimidine metabolism; UMP biosynthesis via de novo pathway; (S)-dihydroorotate from bicarbonate: step 2/3. Its function is as follows. Catalyzes the condensation of carbamoyl phosphate and aspartate to form carbamoyl aspartate and inorganic phosphate, the committed step in the de novo pyrimidine nucleotide biosynthesis pathway. The chain is Aspartate carbamoyltransferase catalytic subunit from Prosthecochloris aestuarii (strain DSM 271 / SK 413).